A 185-amino-acid chain; its full sequence is Acireductone dioxygenase (185 aa).

4 residues coordinate Fe(2+): His-97, His-99, Glu-103, and His-141. 4 residues coordinate Ni(2+): His-97, His-99, Glu-103, and His-141.

Belongs to the acireductone dioxygenase (ARD) family. As to quaternary structure, monomer. It depends on Fe(2+) as a cofactor. The cofactor is Ni(2+).

The enzyme catalyses 1,2-dihydroxy-5-(methylsulfanyl)pent-1-en-3-one + O2 = 3-(methylsulfanyl)propanoate + CO + formate + 2 H(+). The catalysed reaction is 1,2-dihydroxy-5-(methylsulfanyl)pent-1-en-3-one + O2 = 4-methylsulfanyl-2-oxobutanoate + formate + 2 H(+). The protein operates within amino-acid biosynthesis; L-methionine biosynthesis via salvage pathway; L-methionine from S-methyl-5-thio-alpha-D-ribose 1-phosphate: step 5/6. Its function is as follows. Catalyzes 2 different reactions between oxygen and the acireductone 1,2-dihydroxy-3-keto-5-methylthiopentene (DHK-MTPene) depending upon the metal bound in the active site. Fe-containing acireductone dioxygenase (Fe-ARD) produces formate and 2-keto-4-methylthiobutyrate (KMTB), the alpha-ketoacid precursor of methionine in the methionine recycle pathway. Ni-containing acireductone dioxygenase (Ni-ARD) produces methylthiopropionate, carbon monoxide and formate, and does not lie on the methionine recycle pathway. The sequence is that of Acireductone dioxygenase from Stenotrophomonas maltophilia (strain R551-3).